Here is a 367-residue protein sequence, read N- to C-terminus: Phosphoribosylaminoimidazole-succinocarboxamide synthase (367 aa).

The protein belongs to the SAICAR synthetase family.

It catalyses the reaction 5-amino-1-(5-phospho-D-ribosyl)imidazole-4-carboxylate + L-aspartate + ATP = (2S)-2-[5-amino-1-(5-phospho-beta-D-ribosyl)imidazole-4-carboxamido]succinate + ADP + phosphate + 2 H(+). The protein operates within purine metabolism; IMP biosynthesis via de novo pathway; 5-amino-1-(5-phospho-D-ribosyl)imidazole-4-carboxamide from 5-amino-1-(5-phospho-D-ribosyl)imidazole-4-carboxylate: step 1/2. This Shewanella baltica (strain OS223) protein is Phosphoribosylaminoimidazole-succinocarboxamide synthase.